Here is an 88-residue protein sequence, read N- to C-terminus: Small capsomere-interacting protein (88 aa).

The interval 1-30 (MTTIRSDDLSNQITQISGSSKKEEEKKKQQ) is disordered. Over residues 9 to 19 (LSNQITQISGS) the composition is skewed to polar residues.

Belongs to the herpesviridae small capsomere-interacting protein family. As to quaternary structure, interacts with the major capsid protein/MCP.

It localises to the virion. It is found in the host nucleus. Its function is as follows. Participates in the assembly of the infectious particles by decorating the outer surface of the capsid shell and thus forming a layer between the capsid and the tegument. Complexes composed of the major capsid protein and small capsomere-interacting protein/SCP assemble together in the host cytoplasm and are translocated to the nucleus, where they accumulate and participate in capsid assembly. This chain is Small capsomere-interacting protein, found in Human herpesvirus 6A (strain Uganda-1102) (HHV-6 variant A).